Consider the following 184-residue polypeptide: Ribosome-recycling factor (184 aa).

It belongs to the RRF family.

Its subcellular location is the cytoplasm. In terms of biological role, responsible for the release of ribosomes from messenger RNA at the termination of protein biosynthesis. May increase the efficiency of translation by recycling ribosomes from one round of translation to another. The polypeptide is Ribosome-recycling factor (Psychrobacter sp. (strain PRwf-1)).